We begin with the raw amino-acid sequence, 609 residues long: Nuclear factor 7, brain (609 aa).

A Tudor-knot domain is found at 21 to 75 (NVGSTYPCKRSDGSQHDAEIVKVRYNKQAGREEYYAHYVGLNRRQNEWVDKSRLV). Positions 74 to 84 (LVLTKPPKEGE) are enriched in basic and acidic residues. The disordered stretch occupies residues 74-129 (LVLTKPPKEGETNGTDQEVTDTAEQPDSKTPQKRKIEEPEPEPKKAKVEEKDASKN). Residues 85–102 (TNGTDQEVTDTAEQPDSK) show a composition bias toward polar residues. Residue T103 is modified to Phosphothreonine; by CDK1. Positions 107–127 (RKIEEPEPEPKKAKVEEKDAS) are enriched in basic and acidic residues. The RING-type zinc finger occupies 145–185 (CPLCVELFKDPVMVACGHNFCRSCIDKAWEGQSSFACPECR). Residues 219-260 (RPLEKCSEHDERLKLYCKDDGTLSCVICRDSLKHASHNFLPI) form a B box-type zinc finger. Zn(2+)-binding residues include C224, H227, C246, and H252. Residues 278 to 371 (LEASLKVTEQ…SLAKERMEDT (94 aa)) adopt a coiled-coil conformation. The region spanning 413-609 (GPIQYIMWKE…VDPLRFVHNK (197 aa)) is the B30.2/SPRY domain.

Monomer. Threonine (predominantly) and serine residues are phosphorylated during oocyte maturation, when CDK1 is active. At the neurula stage, high expression in dorsal embryo region including neural folds and somites. Also high expression in adult brain (CNS) and low expression in oocytes.

It localises to the nucleus. Transcription factor that determines dorsal-ventral body axis. This is Nuclear factor 7, brain from Xenopus laevis (African clawed frog).